Reading from the N-terminus, the 761-residue chain is MKTWLKTVFGVTTLAALALVVICIVLRPSRVYKPEGNTKRALTLKDILNGTFSYKTYFPNWISEQEYLHQSEDDNIVFYNIETRESYIILSNSTMKSVNATDYGLSPDRQFVYLESDYSKLWRYSYTATYYIYDLQNGEFVRGYELPRPIQYLCWSPVGSKLAYVYQNNIYLKQRPGDPPFQITYTGRENRIFNGIPDWVYEEEMLATKYALWWSPDGKFLAYVEFNDSDIPIIAYSYYGDGQYPRTINIPYPKAGAKNPVVRVFIVDTTYPHHVGPMEVPVPEMIASSDYYFSWLTWVSSERVCLQWLKRVQNVSVLSICDFREDWHAWECPKNQEHVEESRTGWAGGFFVSTPAFSQDATSYYKIFSDKDGYKHIHYIKDTVENAIQITSGKWEAIYIFRVTQDSLFYSSNEFEGYPGRRNIYRISIGNSPPSKKCVTCHLRKERCQYYTASFSYKAKYYALVCYGPGLPISTLHDGRTDQEIQVLEENKELENSLRNIQLPKVEIKKLKDGGLTFWYKMILPPQFDRSKKYPLLIQVYGGPCSQSVKSVFAVNWITYLASKEGIVIALVDGRGTAFQGDKFLHAVYRKLGVYEVEDQLTAVRKFIEMGFIDEERIAIWGWSYGGYVSSLALASGTGLFKCGIAVAPVSSWEYYASIYSERFMGLPTKDDNLEHYKNSTVMARAEYFRNVDYLLIHGTADDNVHFQNSAQIAKALVNAQVDFQAMWYSDQNHGISSGRSQNHLYTHMTHFLKQCFSLSD.

Topologically, residues methionine 1 to tryptophan 4 are cytoplasmic. A helical; Signal-anchor for type II membrane protein membrane pass occupies residues leucine 5–valine 25. Residues leucine 26–aspartate 761 are Extracellular-facing. N-linked (GlcNAc...) asparagine glycosylation is found at asparagine 49, asparagine 92, and asparagine 99. Substrate contacts are provided by glutamate 203 and glutamate 204. Residues asparagine 227 and asparagine 314 are each glycosylated (N-linked (GlcNAc...) asparagine). Cystine bridges form between cysteine 321/cysteine 332, cysteine 438/cysteine 441, and cysteine 448/cysteine 466. The Charge relay system role is filled by serine 624. An intrachain disulfide couples cysteine 643 to cysteine 756. Asparagine 679 carries an N-linked (GlcNAc...) asparagine glycan. Active-site charge relay system residues include aspartate 702 and histidine 734.

This sequence belongs to the peptidase S9B family. As to quaternary structure, homodimer; homodimerization is required for activity of both plasma membrane and soluble forms. The monomer is inactive. Heterodimer with DPP4. Interacts with PLAUR; the interaction occurs at the cell surface of invadopodia membranes. Interacts with ITGB1. Interacts with ITGA3. Associates with integrin alpha-3/beta-1; the association occurs in a collagen-dependent manner at the cell surface of invadopodia membranes. In terms of processing, N-glycosylated. The N-terminus may be blocked. In terms of tissue distribution, expressed strongly in uterus, pancreas, submaxillary gland and skin, less in lymph node, ovary, skeletal muscle, adrenal and bone marrow. Expressed in reactive stromal fibroblast in epithelial cancers. Expressed in melanocytes but not melanomas (at protein level). Detected in fibroblasts, in placenta, uterus, embryos from day 7-19 and in newborn mice (P1).

The protein localises to the cell surface. It is found in the cell membrane. It localises to the cell projection. Its subcellular location is the lamellipodium membrane. The protein resides in the invadopodium membrane. The protein localises to the ruffle membrane. It is found in the membrane. It localises to the secreted. The catalysed reaction is Hydrolysis of Pro-|-Xaa &gt;&gt; Ala-|-Xaa in oligopeptides.. It carries out the reaction Release of an N-terminal dipeptide, Xaa-Yaa-|-Zaa-, from a polypeptide, preferentially when Yaa is Pro, provided Zaa is neither Pro nor hydroxyproline.. Its activity is regulated as follows. Gelatinase activity is inhibited by serine-protease inhibitors, such as phenylmethylsulfonyl fluoride (PMSF), 4-(2-aminoethyl)-benzenesulfonyl fluoride hydrochloride (AEBSF), 4-amidino phenylsulfonyl fluoride (APSF) and diisopropyl fluorophosphate (DFP), N-ethylmaleimide (NEM) and phenylmethylsulfonyl fluoride (PMSF). Dipeptidyl peptidase activity is inhibited by 2,2'-azino-bis(3-ethylbenzthiazoline-6-sulfonic acid), diisopropylfluorophosphate (DFP). Prolyl endopeptidase activity is inhibited by the boronic acid peptide Ac-Gly-BoroPro, Ac-Gly-Pro-chloromethyl ketone and Thr-Ser-Gly-chloromethyl ketone. Its function is as follows. Cell surface glycoprotein serine protease that participates in extracellular matrix degradation and involved in many cellular processes including tissue remodeling, fibrosis, wound healing, inflammation and tumor growth. Both plasma membrane and soluble forms exhibit post-proline cleaving endopeptidase activity, with a marked preference for Ala/Ser-Gly-Pro-Ser/Asn/Ala consensus sequences, on substrate such as alpha-2-antiplasmin SERPINF2 and SPRY2. Degrade also gelatin, heat-denatured type I collagen, but not native collagen type I and IV, vibronectin, tenascin, laminin, fibronectin, fibrin or casein. Also has dipeptidyl peptidase activity, exhibiting the ability to hydrolyze the prolyl bond two residues from the N-terminus of synthetic dipeptide substrates provided that the penultimate residue is proline, with a preference for Ala-Pro, Ile-Pro, Gly-Pro, Arg-Pro and Pro-Pro. Natural neuropeptide hormones for dipeptidyl peptidase are the neuropeptide Y (NPY), peptide YY (PYY), substance P (TAC1) and brain natriuretic peptide 32 (NPPB). The plasma membrane form, in association with either DPP4, PLAUR or integrins, is involved in the pericellular proteolysis of the extracellular matrix (ECM), and hence promotes cell adhesion, migration and invasion through the ECM. Plays a role in tissue remodeling during development and wound healing. Participates in the cell invasiveness towards the ECM in malignant melanoma cancers. Enhances tumor growth progression by increasing angiogenesis, collagen fiber degradation and apoptosis and by reducing antitumor response of the immune system. Promotes glioma cell invasion through the brain parenchyma by degrading the proteoglycan brevican. Acts as a tumor suppressor in melanocytic cells through regulation of cell proliferation and survival in a serine protease activity-independent manner. This is Prolyl endopeptidase FAP from Mus musculus (Mouse).